Here is a 310-residue protein sequence, read N- to C-terminus: Acetylglutamate kinase (310 aa).

Substrate is bound by residues Gly79–Gly80, Arg101, and Asn206.

Belongs to the acetylglutamate kinase family. ArgB subfamily.

It is found in the cytoplasm. It catalyses the reaction N-acetyl-L-glutamate + ATP = N-acetyl-L-glutamyl 5-phosphate + ADP. The protein operates within amino-acid biosynthesis; L-arginine biosynthesis; N(2)-acetyl-L-ornithine from L-glutamate: step 2/4. Its function is as follows. Catalyzes the ATP-dependent phosphorylation of N-acetyl-L-glutamate. The polypeptide is Acetylglutamate kinase (Rhodospirillum rubrum (strain ATCC 11170 / ATH 1.1.1 / DSM 467 / LMG 4362 / NCIMB 8255 / S1)).